The chain runs to 541 residues: Effector protein hopAB1 (541 aa).

Disordered regions lie at residues 1–94 (MPGI…EAQQ), 168–222 (QRAL…RHPQ), and 317–338 (RQTT…SGRR). A compositionally biased stretch (basic and acidic residues) spans 18-31 (TDGEPVTEREHDSS). The segment covering 183–196 (SSSGSSQRSLIGRS) has biased composition (low complexity).

This sequence belongs to the HopAB family.

The protein localises to the secreted. In terms of biological role, effector protein that plays different roles depending on the species and plant cultivars that interact with the pathogen. Acts as a virulence determinant by enhancing the development of disease symptoms and bacterial growth. Acts as an avirulence factor by eliciting hypersensitive response (HR) and plant resistance. This chain is Effector protein hopAB1 (hopAB1), found in Pseudomonas savastanoi (Pseudomonas syringae pv. savastanoi).